Here is a 356-residue protein sequence, read N- to C-terminus: MSL complex subunit 3B (356 aa).

An MRG domain is found at 2-350 (EERTVTLEIP…SEVHYSTRNP (349 aa)). 2 disordered regions span residues 135–210 (TNRS…WQQD) and 225–247 (KTPV…SPVF). Over residues 142 to 156 (LSPSLRLLNPSRPQS) the composition is skewed to low complexity. Polar residues-rich tracts occupy residues 178-189 (AVQSLRRSSPHT) and 229-243 (HSRS…SQEG).

Its subcellular location is the nucleus. In terms of biological role, probable non-catalytic component of the MSL histone acetyltransferase complex, a multiprotein complex that mediates the majority of histone H4 acetylation at 'Lys-16' (H4K16ac), an epigenetic mark that prevents chromatin compaction. The sequence is that of MSL complex subunit 3B from Homo sapiens (Human).